A 106-amino-acid chain; its full sequence is Small ribosomal subunit protein mS33 (106 aa).

S2 is modified (N-acetylserine). Over residues 85–94 (LKKLRGKVKP) the composition is skewed to basic residues. A disordered region spans residues 85-106 (LKKLRGKVKPRKGEGKRAAKKK). The span at 95 to 106 (RKGEGKRAAKKK) shows a compositional bias: basic and acidic residues.

The protein belongs to the mitochondrion-specific ribosomal protein mS33 family. Component of the mitochondrial ribosome small subunit (28S) which comprises a 12S rRNA and about 30 distinct proteins.

The protein resides in the mitochondrion. The protein is Small ribosomal subunit protein mS33 of Bos taurus (Bovine).